Here is a 95-residue protein sequence, read N- to C-terminus: Putative septation protein SpoVG (95 aa).

This sequence belongs to the SpoVG family.

Functionally, could be involved in septation. This chain is Putative septation protein SpoVG, found in Clostridium botulinum (strain ATCC 19397 / Type A).